Consider the following 455-residue polypeptide: Chromosomal replication initiator protein DnaA (455 aa).

The domain I, interacts with DnaA modulators stretch occupies residues 1–73 (METSLETLWS…RDVVHEILGH (73 aa)). Residues 73-116 (HPVEIQIEIAQGDSNATISAPEVASPPPTASPVENTNTSQRQQA) form a domain II region. The tract at residues 92 to 116 (APEVASPPPTASPVENTNTSQRQQA) is disordered. A compositionally biased stretch (polar residues) spans 104–116 (PVENTNTSQRQQA). Positions 117-333 (SLNPKYVFSR…GALIRAVAYI (217 aa)) are domain III, AAA+ region. Residues Gly161, Gly163, Lys164, and Thr165 each contribute to the ATP site. The segment at 334–455 (SISGLPMNVE…GDRIKLANQP (122 aa)) is domain IV, binds dsDNA.

Belongs to the DnaA family. As to quaternary structure, oligomerizes as a right-handed, spiral filament on DNA at oriC.

The protein resides in the cytoplasm. Plays an essential role in the initiation and regulation of chromosomal replication. ATP-DnaA binds to the origin of replication (oriC) to initiate formation of the DNA replication initiation complex once per cell cycle. Binds the DnaA box (a 9 base pair repeat at the origin) and separates the double-stranded (ds)DNA. Forms a right-handed helical filament on oriC DNA; dsDNA binds to the exterior of the filament while single-stranded (ss)DNA is stabiized in the filament's interior. The ATP-DnaA-oriC complex binds and stabilizes one strand of the AT-rich DNA unwinding element (DUE), permitting loading of DNA polymerase. After initiation quickly degrades to an ADP-DnaA complex that is not apt for DNA replication. Binds acidic phospholipids. The chain is Chromosomal replication initiator protein DnaA from Acaryochloris marina (strain MBIC 11017).